The primary structure comprises 254 residues: Isoprenyl transferase (254 aa).

The active site involves aspartate 12. Aspartate 12 contacts Mg(2+). Substrate is bound by residues 13–16 (GNGR), tryptophan 17, arginine 25, histidine 29, and 57–59 (SSE). The active-site Proton acceptor is the asparagine 60. Substrate is bound by residues tryptophan 61, arginine 63, arginine 180, and 186–188 (RLS). Glutamate 199 provides a ligand contact to Mg(2+).

It belongs to the UPP synthase family. Homodimer. Mg(2+) serves as cofactor.

Functionally, catalyzes the condensation of isopentenyl diphosphate (IPP) with allylic pyrophosphates generating different type of terpenoids. The polypeptide is Isoprenyl transferase (Brucella suis biovar 1 (strain 1330)).